Reading from the N-terminus, the 213-residue chain is Peroxynitrite isomerase 2 (213 aa).

A GXWXGXG motif is present at residues 58-64 (GVWRGEG). Heme b-binding residues include Lys-176 and His-203.

It belongs to the nitrobindin family. As to quaternary structure, homodimer. The cofactor is heme b.

The enzyme catalyses peroxynitrite = nitrate. The protein operates within nitrogen metabolism. Heme-binding protein able to scavenge peroxynitrite and to protect free L-tyrosine against peroxynitrite-mediated nitration, by acting as a peroxynitrite isomerase that converts peroxynitrite to nitrate. Therefore, this protein likely plays a role in peroxynitrite sensing and in the detoxification of reactive nitrogen and oxygen species (RNS and ROS, respectively). Is able to bind nitric oxide (NO) in vitro, but may act as a sensor of peroxynitrite levels in vivo. The chain is Peroxynitrite isomerase 2 from Rhodococcus jostii (strain RHA1).